The primary structure comprises 335 residues: Ornithine carbamoyltransferase (335 aa).

Carbamoyl phosphate-binding positions include 56–59 (STRT), glutamine 83, arginine 107, and 134–137 (HPTQ). Residues asparagine 168, aspartate 232, and 236–237 (SM) each bind L-ornithine. Carbamoyl phosphate is bound by residues 274–275 (CL) and arginine 320.

Belongs to the aspartate/ornithine carbamoyltransferase superfamily. OTCase family.

It is found in the cytoplasm. The catalysed reaction is carbamoyl phosphate + L-ornithine = L-citrulline + phosphate + H(+). The protein operates within amino-acid biosynthesis; L-arginine biosynthesis; L-arginine from L-ornithine and carbamoyl phosphate: step 1/3. Its function is as follows. Reversibly catalyzes the transfer of the carbamoyl group from carbamoyl phosphate (CP) to the N(epsilon) atom of ornithine (ORN) to produce L-citrulline. This chain is Ornithine carbamoyltransferase, found in Pectobacterium atrosepticum (strain SCRI 1043 / ATCC BAA-672) (Erwinia carotovora subsp. atroseptica).